The following is a 1058-amino-acid chain: Vacuolar protein sorting-associated protein 54 (1058 aa).

Positions 369-389 (SKKIVEVHERYEQKKKLLAKL) form a coiled coil.

It belongs to the VPS54 family. As to quaternary structure, component of the Golgi-associated retrograde protein (GARP) complex, also called VFT (VPS fifty-three) complex, composed of vps-51, vps-52, vps-53 and vps-54. Within the complex interacts with vps-52 and vps-53.

It localises to the golgi apparatus. Its subcellular location is the trans-Golgi network. Acts as a component of the GARP complex that is involved in retrograde transport from early and late endosomes to the trans-Golgi network (TGN). The GARP complex facilitates tethering as well as SNARE complex assembly at the Golgi. The polypeptide is Vacuolar protein sorting-associated protein 54 (Caenorhabditis elegans).